A 347-amino-acid polypeptide reads, in one-letter code: MFAKQIDIHWQKMKGIKFLHWLLGTVLLWVSLSTPALAIPALDYNPWEAIQLPTTATILDMSFIDRHHGWLVGVNATLMETRDGGQTWEPRTLVLDHSDYRFNSVSFQGNEGWIVGEPPIMLHTTDGGQSWSQIPLDPKLPGSPRLIKALGNGSAEMITNVGAIYRTKDSGKNWQALVQEAIGVMRNLNRSPSGEYVAVSSRGSFYSTWEPGQTAWEPHNRTTSRRLHNMGFTPDGRLWMIVNGGKIAFSDPDNSENWGELLSPLRRNSVGFLDLAYRTPNEVWLAGGAGALLCSQDGGQTWQQDVDVKKVPSNFYKILFFSPDQGFILGQKGILLRYVTDLTAAPA.

The signal sequence occupies residues 1 to 38 (MFAKQIDIHWQKMKGIKFLHWLLGTVLLWVSLSTPALA). An Arg-rich patch motif is present at residues 202-226 (RGSFYSTWEPGQTAWEPHNRTTSRR).

It belongs to the Ycf48 family. Interacts with the D1 protein (crystallized with PsbA1 or PsbA3), via the latter's C-terminal prepropeptide, may interact with parts of the mature D1 protein as well.

The protein localises to the cellular thylakoid lumen. Its function is as follows. A factor required for optimal assembly of photosystem II (PSII), acting in the early stages of PSII assembly. Also plays a role in replacement of photodamaged D1 (psbA). Assists YidC in synthesis of chlorophyll-binding proteins. The polypeptide is Photosystem II assembly protein Ycf48 (Thermosynechococcus vestitus (strain NIES-2133 / IAM M-273 / BP-1)).